A 552-amino-acid polypeptide reads, in one-letter code: CTP synthase (552 aa).

An amidoligase domain region spans residues 1–270 (MTKYVFVTGG…DRIICEELKL (270 aa)). Ser13 contacts CTP. Ser13 is a binding site for UTP. ATP contacts are provided by residues 14 to 19 (SLGKGI) and Asp71. The Mg(2+) site is built by Asp71 and Glu144. CTP-binding positions include 151–153 (DIE), 191–196 (KTKPTQ), and Lys227. Residues 191–196 (KTKPTQ) and Lys227 each bind UTP. Positions 295-547 (TIGMVGKYVD…VEAALANKQA (253 aa)) constitute a Glutamine amidotransferase type-1 domain. Gly356 is an L-glutamine binding site. The active-site Nucleophile; for glutamine hydrolysis is Cys383. Residues 384–387 (LGMQ), Glu407, and Arg473 contribute to the L-glutamine site. Active-site residues include His520 and Glu522.

This sequence belongs to the CTP synthase family. In terms of assembly, homotetramer.

It catalyses the reaction UTP + L-glutamine + ATP + H2O = CTP + L-glutamate + ADP + phosphate + 2 H(+). The catalysed reaction is L-glutamine + H2O = L-glutamate + NH4(+). The enzyme catalyses UTP + NH4(+) + ATP = CTP + ADP + phosphate + 2 H(+). Its pathway is pyrimidine metabolism; CTP biosynthesis via de novo pathway; CTP from UDP: step 2/2. Allosterically activated by GTP, when glutamine is the substrate; GTP has no effect on the reaction when ammonia is the substrate. The allosteric effector GTP functions by stabilizing the protein conformation that binds the tetrahedral intermediate(s) formed during glutamine hydrolysis. Inhibited by the product CTP, via allosteric rather than competitive inhibition. Its function is as follows. Catalyzes the ATP-dependent amination of UTP to CTP with either L-glutamine or ammonia as the source of nitrogen. Regulates intracellular CTP levels through interactions with the four ribonucleotide triphosphates. This is CTP synthase from Burkholderia ambifaria (strain MC40-6).